The sequence spans 333 residues: 5-formaminoimidazole-4-carboxamide-1-(beta)-D-ribofuranosyl 5'-monophosphate synthetase (333 aa).

His-20 and Ser-85 together coordinate 5-amino-1-(5-phospho-beta-D-ribosyl)imidazole-4-carboxamide. An ATP-grasp domain is found at 106-313 (RELIKWEADQ…YFDRPMDMGE (208 aa)). Residues 136 to 187 (PEEV…VPAY) and Glu-209 each bind ATP. Asn-229 serves as a coordination point for 5-amino-1-(5-phospho-beta-D-ribosyl)imidazole-4-carboxamide. Mg(2+)-binding residues include Glu-268 and Glu-281.

It belongs to the phosphohexose mutase family. Requires Mg(2+) as cofactor. Mn(2+) serves as cofactor.

The catalysed reaction is 5-amino-1-(5-phospho-beta-D-ribosyl)imidazole-4-carboxamide + formate + ATP = 5-formamido-1-(5-phospho-D-ribosyl)imidazole-4-carboxamide + ADP + phosphate. It participates in purine metabolism; IMP biosynthesis via de novo pathway; 5-formamido-1-(5-phospho-D-ribosyl)imidazole-4-carboxamide from 5-amino-1-(5-phospho-D-ribosyl)imidazole-4-carboxamide (formate route): step 1/1. Functionally, catalyzes the ATP- and formate-dependent formylation of 5-aminoimidazole-4-carboxamide-1-beta-d-ribofuranosyl 5'-monophosphate (AICAR) to 5-formaminoimidazole-4-carboxamide-1-beta-d-ribofuranosyl 5'-monophosphate (FAICAR) in the absence of folates. The chain is 5-formaminoimidazole-4-carboxamide-1-(beta)-D-ribofuranosyl 5'-monophosphate synthetase from Pyrobaculum islandicum (strain DSM 4184 / JCM 9189 / GEO3).